The sequence spans 436 residues: 3-ketoacyl-CoA thiolase (436 aa).

Catalysis depends on cysteine 99, which acts as the Acyl-thioester intermediate. Active-site proton acceptor residues include histidine 392 and cysteine 422.

This sequence belongs to the thiolase-like superfamily. Thiolase family. As to quaternary structure, heterotetramer of two alpha chains (FadJ) and two beta chains (FadI).

The protein resides in the cytoplasm. It carries out the reaction an acyl-CoA + acetyl-CoA = a 3-oxoacyl-CoA + CoA. Its pathway is lipid metabolism; fatty acid beta-oxidation. In terms of biological role, catalyzes the final step of fatty acid oxidation in which acetyl-CoA is released and the CoA ester of a fatty acid two carbons shorter is formed. The protein is 3-ketoacyl-CoA thiolase of Shewanella halifaxensis (strain HAW-EB4).